A 471-amino-acid chain; its full sequence is Ribonuclease 3 (471 aa).

The span at 1 to 10 (MGSKVAGKKK) shows a compositional bias: basic residues. 2 disordered regions span residues 1-29 (MGSKVAGKKKTQNDNKLDNENGSQQRENI) and 168-189 (NLNEKEDEEEDEGEDSYDPTKA). A compositionally biased stretch (polar residues) spans 20–29 (ENGSQQRENI). The span at 172 to 184 (KEDEEEDEGEDSY) shows a compositional bias: acidic residues. An RNase III domain is found at 227–331 (LSGSEMINAH…YIGGLMEDDP (105 aa)). One can recognise a DRBM domain in the interval 369-437 (NAKRQLYSLI…AENALRDKKM (69 aa)). The segment at 451–471 (SESVLKDPSQKNKKRKFSDTS) is disordered. Residues 461 to 471 (KNKKRKFSDTS) are compositionally biased toward basic residues.

It carries out the reaction Endonucleolytic cleavage to 5'-phosphomonoester.. DsRNA-specific nuclease that cleaves eukaryotic pre-ribosomal RNA at the U3 snoRNP-dependent A0 site in the 5'-external transcribed spacer (ETS) and in the 3'-ETS. In vitro, cleaves synthetic 5'-ETS RNA A0 site in the absence of snoRNA or other factors. Has an essential growth function in addition to pre-rRNA processing. This is Ribonuclease 3 (RNT1) from Saccharomyces cerevisiae (strain ATCC 204508 / S288c) (Baker's yeast).